A 327-amino-acid chain; its full sequence is Tryptophan--tRNA ligase (327 aa).

Residues 9–11 and 17–18 contribute to the ATP site; these read QPS and GN. A 'HIGH' region motif is present at residues 10–18; the sequence is PSGTLTLGN. An L-tryptophan-binding site is contributed by aspartate 132. ATP is bound by residues 144–146, isoleucine 183, and 192–196; these read GDD and KMSKS. The short motif at 192–196 is the 'KMSKS' region element; the sequence is KMSKS.

This sequence belongs to the class-I aminoacyl-tRNA synthetase family. In terms of assembly, homodimer.

It is found in the cytoplasm. It catalyses the reaction tRNA(Trp) + L-tryptophan + ATP = L-tryptophyl-tRNA(Trp) + AMP + diphosphate + H(+). Catalyzes the attachment of tryptophan to tRNA(Trp). This Oceanobacillus iheyensis (strain DSM 14371 / CIP 107618 / JCM 11309 / KCTC 3954 / HTE831) protein is Tryptophan--tRNA ligase.